The chain runs to 872 residues: Leucine-rich repeat-containing protein 66 (872 aa).

A helical transmembrane segment spans residues 4-24 (FYVRVTILVTGLCFVETVTTP). 2 N-linked (GlcNAc...) asparagine glycosylation sites follow: N45 and N108. 5 LRR repeats span residues 142 to 164 (RLQVLILQRNQLSGTPKGLWKLK), 165 to 186 (SLRSLDLSFNRIVHIGLSDFHG), 189 to 210 (QLESIYLKSNKICTIHPKAFKG), 213 to 234 (KLQVVDLRSNALTTLVPIVTIA), and 239 to 259 (HLELGLADNQWQCSESNVNFQ). Positions 339–363 (LRGMWPQSPVELRDSQDEQVTDRKD) are disordered. The span at 349–363 (ELRDSQDEQVTDRKD) shows a compositional bias: basic and acidic residues. The helical transmembrane segment at 371 to 391 (LAICLSVFITFVVAFCLGAFA) threads the bilayer. A compositionally biased stretch (polar residues) spans 467-483 (QMLGSNGTDPGHQQSPE). Disordered regions lie at residues 467–501 (QMLGSNGTDPGHQQSPEQLKDSNESRSGDSIVLPS), 560–579 (GTFPSSVESRRDDLHPSQPR), 695–761 (NYES…SQRI), and 776–872 (LISG…SKHW). The N-linked (GlcNAc...) asparagine glycan is linked to N472. Residues 484–493 (QLKDSNESRS) show a composition bias toward basic and acidic residues. At S718 the chain carries Phosphoserine. 3 stretches are compositionally biased toward polar residues: residues 725–736 (SVENDGTSQPLP), 746–760 (SVTSAESVEDLTSQR), and 785–805 (CETNQENDSSSLDPENRSTWP). The residue at position 752 (S752) is a Phosphoserine. The span at 831–841 (VDWHYSLRDLE) shows a compositional bias: basic and acidic residues.

Its subcellular location is the membrane. The protein is Leucine-rich repeat-containing protein 66 (Lrrc66) of Mus musculus (Mouse).